Here is a 323-residue protein sequence, read N- to C-terminus: Breast cancer metastasis-suppressor 1-like protein (323 aa).

The span at 1-17 (MPVHSRGDKKETNHHDE) shows a compositional bias: basic and acidic residues. The tract at residues 1 to 56 (MPVHSRGDKKETNHHDEMEVDYAENEGSSSEDEDTESSSVSEDGDSSEMDDEDCER) is disordered. A compositionally biased stretch (acidic residues) spans 18–53 (MEVDYAENEGSSSEDEDTESSSVSEDGDSSEMDDED). Coiled-coil stretches lie at residues 52 to 84 (EDCE…KERL) and 149 to 180 (EKLL…ITSE). Position 197 is a phosphoserine (serine 197). Glycyl lysine isopeptide (Lys-Gly) (interchain with G-Cter in SUMO2) cross-links involve residues lysine 240 and lysine 246.

Belongs to the BRMS1 family. Component of the Sin3/HDAC1 corepressor complex at least composed of BRMS1, BRMS1L and ING2/ING1L. Interacts with HDAC and SIN3A.

The protein resides in the nucleus. Functionally, involved in the histone deacetylase (HDAC1)-dependent transcriptional repression activity. When overexpressed in lung cancer cell line that lacks p53/TP53 expression, inhibits cell growth. This Bos taurus (Bovine) protein is Breast cancer metastasis-suppressor 1-like protein (BRMS1L).